We begin with the raw amino-acid sequence, 23 residues long: Defensin-like protein 2 (23 aa).

Pyrrolidone carboxylic acid is present on Gln1.

The protein belongs to the DEFL family. Forms oligomers in its native state.

In terms of biological role, possesses antifungal activity sensitive to inorganic cations. The polypeptide is Defensin-like protein 2 (Brassica napus (Rape)).